Reading from the N-terminus, the 377-residue chain is RIB43A-like with coiled-coils protein 2 (377 aa).

The stretch at 188–238 forms a coiled coil; that stretch reads ELKFDEAARDLQRLEITTRKAVCAAVKEFNKKQVVELAERKRQVKQQEQED. Positions 355–377 are disordered; sequence QLDAAPSSQPTEDYFSQFNTRSR. The segment covering 360–377 has biased composition (polar residues); it reads PSSQPTEDYFSQFNTRSR.

It belongs to the RIB43A family. In terms of assembly, microtubule inner protein component of sperm flagellar doublet microtubules.

The protein localises to the cytoplasm. It is found in the cytoskeleton. The protein resides in the cilium axoneme. It localises to the flagellum axoneme. Its function is as follows. Microtubule inner protein (MIP) part of the dynein-decorated doublet microtubules (DMTs) in cilia axoneme, which is required for motile cilia beating. This is RIB43A-like with coiled-coils protein 2 from Rattus norvegicus (Rat).